We begin with the raw amino-acid sequence, 565 residues long: DNA ligase B (565 aa).

Lys130 (N6-AMP-lysine intermediate) is an active-site residue.

Belongs to the NAD-dependent DNA ligase family. LigB subfamily.

It catalyses the reaction NAD(+) + (deoxyribonucleotide)n-3'-hydroxyl + 5'-phospho-(deoxyribonucleotide)m = (deoxyribonucleotide)n+m + AMP + beta-nicotinamide D-nucleotide.. Catalyzes the formation of phosphodiester linkages between 5'-phosphoryl and 3'-hydroxyl groups in double-stranded DNA using NAD as a coenzyme and as the energy source for the reaction. The sequence is that of DNA ligase B from Yersinia enterocolitica serotype O:8 / biotype 1B (strain NCTC 13174 / 8081).